The primary structure comprises 406 residues: Acetylornithine/succinyldiaminopimelate aminotransferase (406 aa).

Pyridoxal 5'-phosphate contacts are provided by residues 108–109 (GT) and F141. R144 serves as a coordination point for N(2)-acetyl-L-ornithine. A pyridoxal 5'-phosphate-binding site is contributed by 226-229 (DEVQ). N6-(pyridoxal phosphate)lysine is present on K255. S283 is a N(2)-acetyl-L-ornithine binding site. A pyridoxal 5'-phosphate-binding site is contributed by T284.

It belongs to the class-III pyridoxal-phosphate-dependent aminotransferase family. ArgD subfamily. As to quaternary structure, homodimer. Requires pyridoxal 5'-phosphate as cofactor.

Its subcellular location is the cytoplasm. The catalysed reaction is N(2)-acetyl-L-ornithine + 2-oxoglutarate = N-acetyl-L-glutamate 5-semialdehyde + L-glutamate. It catalyses the reaction N-succinyl-(2S,6S)-2,6-diaminopimelate + 2-oxoglutarate = (S)-2-succinylamino-6-oxoheptanedioate + L-glutamate. It functions in the pathway amino-acid biosynthesis; L-arginine biosynthesis; N(2)-acetyl-L-ornithine from L-glutamate: step 4/4. The protein operates within amino-acid biosynthesis; L-lysine biosynthesis via DAP pathway; LL-2,6-diaminopimelate from (S)-tetrahydrodipicolinate (succinylase route): step 2/3. Functionally, involved in both the arginine and lysine biosynthetic pathways. The protein is Acetylornithine/succinyldiaminopimelate aminotransferase of Escherichia coli (strain K12).